We begin with the raw amino-acid sequence, 393 residues long: UDP-sulfoquinovose synthase (393 aa).

NAD(+) is bound by residues 31 to 35 (DNLST), 74 to 75 (DI), Arg100, and Asn118. Arg100 provides a ligand contact to substrate. Substrate contacts are provided by Thr144 and Tyr182. Thr144 is a catalytic residue. Tyr182 and Lys186 together coordinate NAD(+). Tyr182 acts as the Proton acceptor in catalysis. The active site involves Lys186. Gln209 contacts substrate. Residue Val212 participates in NAD(+) binding. Substrate contacts are provided by residues 238–241 (VVNR), 253–255 (TVY), and 326–328 (RVE).

This sequence belongs to the NAD(P)-dependent epimerase/dehydratase family. The cofactor is NAD(+).

It catalyses the reaction sulfite + UDP-alpha-D-glucose + H(+) = UDP-alpha-D-6-sulfoquinovose + H2O. Catalyzes the biosynthesis of UDP-sulfoquinovose by the transfer of sulfite to UDP-glucose. Important for the assembly of the S-layer N-glycans. The reaction probably occurs through an NAD(+)-dependent oxidation/dehydration/enolization/sulfite addition process. In vitro, in the absence of sulfite, UDP-D-glucose is converted via UDP-4-keto-D-glucose to UDP-D-glucose-5,6-ene. In Sulfolobus acidocaldarius (strain ATCC 33909 / DSM 639 / JCM 8929 / NBRC 15157 / NCIMB 11770), this protein is UDP-sulfoquinovose synthase.